The following is a 353-amino-acid chain: Fe(3+) ions import ATP-binding protein FbpC (353 aa).

Residues 9 to 239 form the ABC transporter domain; it reads VTFENVTKKF…PASAFIADFM (231 aa). 41–48 contributes to the ATP binding site; it reads GLSGCGKT.

The protein belongs to the ABC transporter superfamily. Fe(3+) ion importer (TC 3.A.1.10) family. As to quaternary structure, the complex is composed of two ATP-binding proteins (FbpC), two transmembrane proteins (FbpB) and a solute-binding protein (FbpA).

The protein resides in the cell inner membrane. The enzyme catalyses Fe(3+)(out) + ATP + H2O = Fe(3+)(in) + ADP + phosphate + H(+). Part of the ABC transporter complex FbpABC involved in Fe(3+) ions import. Responsible for energy coupling to the transport system. The sequence is that of Fe(3+) ions import ATP-binding protein FbpC from Brucella melitensis biotype 1 (strain ATCC 23456 / CCUG 17765 / NCTC 10094 / 16M).